The following is a 628-amino-acid chain: Leucine-rich repeat and fibronectin type-III domain-containing protein 3 (628 aa).

The signal sequence occupies residues 1-16 (MAVLPLLLCLLPLAPA). The Extracellular segment spans residues 17–540 (SSPPQPASPS…APHAPFLGGT (524 aa)). In terms of domain architecture, LRRNT spans 19-59 (PPQPASPSPCPRRCRCQTQSLPLSVLCPGAGLLFVPPSLDR). 7 LRR repeats span residues 60–83 (RAAELRLADNFIATVRRRDLANMT), 84–105 (GLLHLSLSRNTIRHVAAGAFSD), 108–129 (ALRALHLDGNRLTSLGEGQLRG), 132–153 (NLRHLILSNNQLAALAAGALDD), 157–178 (TLEDLDLSYNNLEQLPWEALGR), 181–202 (NVNTLGLDHNLLASVPAGAFSR), and 205–226 (KLARLDMTSNRLTTIPPDPLFS). Positions 249-295 (NPLHCNCELVWLRRLAREDDLEACASPPALGGRYFWAVGEEEFVCEP) constitute an LRRCT domain. The 88-residue stretch at 295-382 (PPVVTHRSPP…GEATAAVELT (88 aa)) folds into the Ig-like domain. The cysteines at positions 317 and 366 are disulfide-linked. N-linked (GlcNAc...) asparagine glycans are attached at residues asparagine 348 and asparagine 393. Residues 380–433 (ELTVGPPPPPQLANSTSCDPPRDGEPDALTPPSAASASASAKAAEAGPPTDRGV) are disordered. Residues 410–428 (PPSAASASASAKAAEAGPP) show a composition bias toward low complexity. Residues 427-525 (PPTDRGVQVT…GCNRFSTEPA (99 aa)) form the Fibronectin type-III domain. The helical transmembrane segment at 541-561 (MIIALGGVIVASVLVFIFVLL) threads the bilayer. Topologically, residues 562–628 (MRYKVHGGQP…WGPSHEPMGP (67 aa)) are cytoplasmic. The tract at residues 570 to 609 (QPPGKTKASAPVSSVCSQTNGALGPMPAPPAPEPSAPRAH) is disordered. A compositionally biased stretch (polar residues) spans 580–590 (PVSSVCSQTNG). Over residues 595 to 604 (MPAPPAPEPS) the composition is skewed to pro residues.

The protein belongs to the LRFN family. Can form heteromeric complexes with LRFN1, LRFN2, LRFN4 and LRFN5. Able to form homomeric complexes across cell junctions, between adjacent cells. Does not interact with DLG4. N-glycosylated.

It localises to the cell membrane. The protein localises to the cell projection. Its subcellular location is the axon. It is found in the dendrite. The protein resides in the synapse. It localises to the presynaptic cell membrane. The protein localises to the postsynaptic cell membrane. Cell adhesion molecule that mediates homophilic cell-cell adhesion in a Ca(2+)-independent manner. Promotes neurite outgrowth in hippocampal neurons. In Bos taurus (Bovine), this protein is Leucine-rich repeat and fibronectin type-III domain-containing protein 3 (LRFN3).